A 136-amino-acid polypeptide reads, in one-letter code: Small ribosomal subunit protein uS8 (136 aa).

The protein belongs to the universal ribosomal protein uS8 family. Part of the 30S ribosomal subunit. Contacts proteins S5 and S12.

Its function is as follows. One of the primary rRNA binding proteins, it binds directly to 16S rRNA central domain where it helps coordinate assembly of the platform of the 30S subunit. This is Small ribosomal subunit protein uS8 from Sulfurihydrogenibium sp. (strain YO3AOP1).